The chain runs to 73 residues: Translation initiation factor IF-1 (73 aa).

The S1-like domain occupies 1-72; the sequence is MAKEEAIEKD…SKGRIVYRYK (72 aa).

The protein belongs to the IF-1 family. Component of the 30S ribosomal translation pre-initiation complex which assembles on the 30S ribosome in the order IF-2 and IF-3, IF-1 and N-formylmethionyl-tRNA(fMet); mRNA recruitment can occur at any time during PIC assembly.

It localises to the cytoplasm. In terms of biological role, one of the essential components for the initiation of protein synthesis. Stabilizes the binding of IF-2 and IF-3 on the 30S subunit to which N-formylmethionyl-tRNA(fMet) subsequently binds. Helps modulate mRNA selection, yielding the 30S pre-initiation complex (PIC). Upon addition of the 50S ribosomal subunit IF-1, IF-2 and IF-3 are released leaving the mature 70S translation initiation complex. The protein is Translation initiation factor IF-1 of Salinibacter ruber (strain DSM 13855 / M31).